Reading from the N-terminus, the 428-residue chain is Enolase (428 aa).

Glutamine 164 is a (2R)-2-phosphoglycerate binding site. Residue glutamate 208 is the Proton donor of the active site. Residues aspartate 245, glutamate 286, and aspartate 313 each coordinate Mg(2+). Residues lysine 338, arginine 367, serine 368, and lysine 389 each contribute to the (2R)-2-phosphoglycerate site. Residue lysine 338 is the Proton acceptor of the active site.

Belongs to the enolase family. Mg(2+) serves as cofactor.

The protein resides in the cytoplasm. It is found in the secreted. Its subcellular location is the cell surface. It carries out the reaction (2R)-2-phosphoglycerate = phosphoenolpyruvate + H2O. Its pathway is carbohydrate degradation; glycolysis; pyruvate from D-glyceraldehyde 3-phosphate: step 4/5. Its function is as follows. Catalyzes the reversible conversion of 2-phosphoglycerate (2-PG) into phosphoenolpyruvate (PEP). It is essential for the degradation of carbohydrates via glycolysis. The polypeptide is Enolase (Pyrococcus horikoshii (strain ATCC 700860 / DSM 12428 / JCM 9974 / NBRC 100139 / OT-3)).